The chain runs to 109 residues: Fluoride-specific ion channel FluC 1 (109 aa).

The next 3 helical transmembrane spans lie at 21–41 (FYFK…GFFI), 52–72 (ILFS…HFLY), and 83–103 (LFIY…IGFQ).

Belongs to the fluoride channel Fluc/FEX (TC 1.A.43) family.

The protein localises to the cell inner membrane. It carries out the reaction fluoride(in) = fluoride(out). Functionally, fluoride-specific ion channel. Important for reducing fluoride concentration in the cell, thus reducing its toxicity. The protein is Fluoride-specific ion channel FluC 1 of Prochlorococcus marinus subsp. pastoris (strain CCMP1986 / NIES-2087 / MED4).